The primary structure comprises 320 residues: Cytochrome f (320 aa).

The signal sequence occupies residues methionine 1–alanine 35. Heme contacts are provided by tyrosine 36, cysteine 56, cysteine 59, and histidine 60. The chain crosses the membrane as a helical span at residues valine 286–lysine 306.

The protein belongs to the cytochrome f family. In terms of assembly, the 4 large subunits of the cytochrome b6-f complex are cytochrome b6, subunit IV (17 kDa polypeptide, petD), cytochrome f and the Rieske protein, while the 4 small subunits are PetG, PetL, PetM and PetN. The complex functions as a dimer. It depends on heme as a cofactor.

The protein localises to the plastid. The protein resides in the chloroplast thylakoid membrane. Component of the cytochrome b6-f complex, which mediates electron transfer between photosystem II (PSII) and photosystem I (PSI), cyclic electron flow around PSI, and state transitions. The sequence is that of Cytochrome f from Chloranthus spicatus (Chulantree).